The chain runs to 274 residues: Rhamnulose-1-phosphate aldolase (274 aa).

Residue Glu117 is part of the active site. Residues His141, His143, and His212 each contribute to the Zn(2+) site.

This sequence belongs to the aldolase class II family. RhaD subfamily. Homotetramer. Zn(2+) is required as a cofactor.

Its subcellular location is the cytoplasm. It catalyses the reaction L-rhamnulose 1-phosphate = (S)-lactaldehyde + dihydroxyacetone phosphate. It functions in the pathway carbohydrate degradation; L-rhamnose degradation; glycerone phosphate from L-rhamnose: step 3/3. Its function is as follows. Catalyzes the reversible cleavage of L-rhamnulose-1-phosphate to dihydroxyacetone phosphate (DHAP) and L-lactaldehyde. In Escherichia coli O17:K52:H18 (strain UMN026 / ExPEC), this protein is Rhamnulose-1-phosphate aldolase.